A 327-amino-acid chain; its full sequence is cAMP-dependent protein kinase regulatory subunit (327 aa).

Residues 1–47 (MTNNISHNQKATEKVEAQNNNNITRKRRGAISSEPLGDKPATPLPNI) are disordered. The interval 1 to 65 (MTNNISHNQK…RLEQALSNNI (65 aa)) is dimerization and phosphorylation. A Pseudophosphorylation motif motif is present at residues 27–31 (RRGAI). Ser-32 bears the Phosphoserine mark. Residues 66 to 188 (MFSH…EKVS), Glu-136, Arg-145, 189 to 327 (ILRH…SQKS), Glu-262, and Arg-271 each bind 3',5'-cyclic AMP.

It belongs to the cAMP-dependent kinase regulatory chain family. In Dictyostelium the holoenzyme is a dimer composed of a regulatory (R) and a catalytic (C) subunit. In the presence of cAMP it dissociates into the active C subunit and an R monomer. In other eukaryotes the holoenzyme is a tetramer composed of 2 regulatory (R) and 2 catalytic (C) subunits. In the presence of cAMP it dissociates into active monomeric C subunits and an R dimer. Post-translationally, the pseudophosphorylation site binds to the substrate-binding region of the catalytic chain but is not phosphorylated. The physiological significance of phosphorylations by other kinases is unclear.

The sequence is that of cAMP-dependent protein kinase regulatory subunit (pkaR) from Dictyostelium discoideum (Social amoeba).